A 153-amino-acid chain; its full sequence is Ribosome maturation factor RimP (153 aa).

Belongs to the RimP family.

It is found in the cytoplasm. In terms of biological role, required for maturation of 30S ribosomal subunits. This is Ribosome maturation factor RimP from Glaesserella parasuis serovar 5 (strain SH0165) (Haemophilus parasuis).